A 2392-amino-acid polypeptide reads, in one-letter code: Protein Ycf2 (2392 aa).

ATP is bound at residue 1658-1665; that stretch reads GPTEIGKS.

The protein belongs to the Ycf2 family.

It localises to the plastid. The protein localises to the chloroplast stroma. Functionally, probable ATPase of unknown function. Its presence in a non-photosynthetic plant (Epifagus virginiana) and experiments in tobacco indicate that it has an essential function which is probably not related to photosynthesis. In Anthoceros angustus (Hornwort), this protein is Protein Ycf2.